A 640-amino-acid chain; its full sequence is Translation factor GUF1, mitochondrial (640 aa).

The transit peptide at 1–26 directs the protein to the mitochondrion; that stretch reads MRRLRSLYLQSSICFRRFNHYSAKDT. The tr-type G domain occupies 39 to 223; it reads ENYRNFSIVA…AIIDRIPPPT (185 aa). GTP contacts are provided by residues 48-55, 115-119, and 169-172; these read AHVDHGKS, DTPGH, and NKID.

It belongs to the TRAFAC class translation factor GTPase superfamily. Classic translation factor GTPase family. LepA subfamily.

The protein localises to the mitochondrion inner membrane. It carries out the reaction GTP + H2O = GDP + phosphate + H(+). Its function is as follows. Promotes mitochondrial protein synthesis. May act as a fidelity factor of the translation reaction, by catalyzing a one-codon backward translocation of tRNAs on improperly translocated ribosomes. Binds to mitochondrial ribosomes in a GTP-dependent manner. This chain is Translation factor GUF1, mitochondrial, found in Lachancea thermotolerans (strain ATCC 56472 / CBS 6340 / NRRL Y-8284) (Yeast).